The following is a 61-amino-acid chain: Small ribosomal subunit protein uS14 (61 aa).

Zn(2+)-binding residues include Cys-24, Cys-27, Cys-40, and Cys-43.

Belongs to the universal ribosomal protein uS14 family. Zinc-binding uS14 subfamily. In terms of assembly, part of the 30S ribosomal subunit. Contacts proteins S3 and S10. It depends on Zn(2+) as a cofactor.

Its function is as follows. Binds 16S rRNA, required for the assembly of 30S particles and may also be responsible for determining the conformation of the 16S rRNA at the A site. The sequence is that of Small ribosomal subunit protein uS14 from Desulfovibrio desulfuricans (strain ATCC 27774 / DSM 6949 / MB).